The sequence spans 358 residues: UDP-N-acetylglucosamine--N-acetylmuramyl-(pentapeptide) pyrophosphoryl-undecaprenol N-acetylglucosamine transferase (358 aa).

UDP-N-acetyl-alpha-D-glucosamine is bound by residues 10 to 12 (TGG), N124, R165, S187, I243, and Q288.

Belongs to the glycosyltransferase 28 family. MurG subfamily.

It localises to the cell inner membrane. It carries out the reaction di-trans,octa-cis-undecaprenyl diphospho-N-acetyl-alpha-D-muramoyl-L-alanyl-D-glutamyl-meso-2,6-diaminopimeloyl-D-alanyl-D-alanine + UDP-N-acetyl-alpha-D-glucosamine = di-trans,octa-cis-undecaprenyl diphospho-[N-acetyl-alpha-D-glucosaminyl-(1-&gt;4)]-N-acetyl-alpha-D-muramoyl-L-alanyl-D-glutamyl-meso-2,6-diaminopimeloyl-D-alanyl-D-alanine + UDP + H(+). It participates in cell wall biogenesis; peptidoglycan biosynthesis. Cell wall formation. Catalyzes the transfer of a GlcNAc subunit on undecaprenyl-pyrophosphoryl-MurNAc-pentapeptide (lipid intermediate I) to form undecaprenyl-pyrophosphoryl-MurNAc-(pentapeptide)GlcNAc (lipid intermediate II). This chain is UDP-N-acetylglucosamine--N-acetylmuramyl-(pentapeptide) pyrophosphoryl-undecaprenol N-acetylglucosamine transferase, found in Syntrophotalea carbinolica (strain DSM 2380 / NBRC 103641 / GraBd1) (Pelobacter carbinolicus).